The sequence spans 172 residues: Galectin-related protein (172 aa).

Residue A2 is modified to N-acetylalanine. A phosphoserine mark is found at S22 and S25. The region spanning 39 to 168 (PFCGHIKGGM…TIKINGDLQI (130 aa)) is the Galectin domain.

In terms of assembly, monomer.

In terms of biological role, does not bind lactose, and may not bind carbohydrates. This Mus musculus (Mouse) protein is Galectin-related protein (Lgalsl).